Here is a 121-residue protein sequence, read N- to C-terminus: uncharacterized protein (121 aa).

2 disordered regions span residues 1–41 (MRRQ…QESR) and 94–121 (GGTISGQQSRNSSLPQAKYYSRHGGLRR). The segment covering 98–108 (SGQQSRNSSLP) has biased composition (polar residues).

Predominantly expressed in tissues containing motile cilia. Also expressed in non-motile ciliated adult olfactory bulbs.

The protein localises to the cytoplasm. It localises to the cytoskeleton. Its subcellular location is the cilium basal body. This is an uncharacterized protein from Mus musculus (Mouse).